The chain runs to 331 residues: Adenine deaminase (331 aa).

Residues His17, His19, and His197 each coordinate Zn(2+). Glu200 (proton donor) is an active-site residue. Asp278 contacts Zn(2+). Substrate is bound at residue Asp279.

Belongs to the metallo-dependent hydrolases superfamily. Adenosine and AMP deaminases family. Adenine deaminase type 2 subfamily. Requires Zn(2+) as cofactor.

The enzyme catalyses adenine + H2O + H(+) = hypoxanthine + NH4(+). Functionally, catalyzes the hydrolytic deamination of adenine to hypoxanthine. Plays an important role in the purine salvage pathway and in nitrogen catabolism. This chain is Adenine deaminase, found in Wolinella succinogenes (strain ATCC 29543 / DSM 1740 / CCUG 13145 / JCM 31913 / LMG 7466 / NCTC 11488 / FDC 602W) (Vibrio succinogenes).